A 784-amino-acid polypeptide reads, in one-letter code: Probable leucine-rich repeat receptor-like protein kinase IMK3 (784 aa).

A signal peptide spans 1-48; it reads MEFITQNQAITSLSMINTDIDQPKASLRSRFLLHLIICLLFFVPPCSS. Residues 49 to 409 are Extracellular-facing; sequence QAWDGVVITQ…PSHRNLSTKD (361 aa). An N-linked (GlcNAc...) asparagine glycan is attached at asparagine 82. LRR repeat units follow at residues 126 to 148, 150 to 172, 174 to 197, 198 to 220, 222 to 242, 247 to 268, 271 to 294, 295 to 317, 319 to 342, and 343 to 365; these read ALRK…LGLI, NLRG…LGVS, FLQT…ADSS, KLLR…LSRS, SLQF…DTWG, NLRV…SLCN, QLQD…SKLT, KLRK…LGNI, SLIH…SDLE, and SLNF…LSQK. Residues asparagine 203, asparagine 232, and asparagine 268 are each glycosylated (N-linked (GlcNAc...) asparagine). Residue asparagine 316 is glycosylated (N-linked (GlcNAc...) asparagine). Residues asparagine 348, asparagine 353, asparagine 367, and asparagine 404 are each glycosylated (N-linked (GlcNAc...) asparagine). A helical transmembrane segment spans residues 410–430; sequence IILIASGALLIVMLILVCVLC. The Cytoplasmic segment spans residues 431 to 784; sequence CLLRKKANET…VPEASASTSQ (354 aa). Residues 441–467 form a disordered region; that stretch reads KAKGGEAGPGAVAAKTEKGGEAEAGGE. Residues 488-773 form the Protein kinase domain; sequence CATAEIMGKS…TTATTSEPLI (286 aa). Residues 494-502 and lysine 516 contribute to the ATP site; that span reads MGKSTYGTV. The segment at 760-784 is disordered; that stretch reads RPEETTATTSEPLIDVPEASASTSQ.

This sequence belongs to the protein kinase superfamily. Ser/Thr protein kinase family. Interacts with AGL24. Autophosphorylated. As to expression, expressed in meristems, including roots, vegetative, inflorescence and floral meristems, and in embryos.

The protein resides in the cell membrane. The enzyme catalyses L-seryl-[protein] + ATP = O-phospho-L-seryl-[protein] + ADP + H(+). It carries out the reaction L-threonyl-[protein] + ATP = O-phospho-L-threonyl-[protein] + ADP + H(+). In terms of biological role, can phosphorylate AGL24. In Arabidopsis thaliana (Mouse-ear cress), this protein is Probable leucine-rich repeat receptor-like protein kinase IMK3 (IMK3).